The chain runs to 680 residues: 1-deoxy-D-xylulose-5-phosphate synthase (680 aa).

Residues 1-17 (MQQSPHSPQSQSLSASA) are compositionally biased toward low complexity. The disordered stretch occupies residues 1–20 (MQQSPHSPQSQSLSASAVDS). Residues histidine 113 and 154 to 156 (GHS) contribute to the thiamine diphosphate site. Aspartate 185 lines the Mg(2+) pocket. Thiamine diphosphate-binding positions include 186-187 (GA), asparagine 214, phenylalanine 323, and glutamate 408. Asparagine 214 serves as a coordination point for Mg(2+).

Belongs to the transketolase family. DXPS subfamily. In terms of assembly, homodimer. Requires Mg(2+) as cofactor. The cofactor is thiamine diphosphate.

The enzyme catalyses D-glyceraldehyde 3-phosphate + pyruvate + H(+) = 1-deoxy-D-xylulose 5-phosphate + CO2. The protein operates within metabolic intermediate biosynthesis; 1-deoxy-D-xylulose 5-phosphate biosynthesis; 1-deoxy-D-xylulose 5-phosphate from D-glyceraldehyde 3-phosphate and pyruvate: step 1/1. Its function is as follows. Catalyzes the acyloin condensation reaction between C atoms 2 and 3 of pyruvate and glyceraldehyde 3-phosphate to yield 1-deoxy-D-xylulose-5-phosphate (DXP). The polypeptide is 1-deoxy-D-xylulose-5-phosphate synthase (Psychrobacter cryohalolentis (strain ATCC BAA-1226 / DSM 17306 / VKM B-2378 / K5)).